We begin with the raw amino-acid sequence, 526 residues long: Ubiquitin carboxyl-terminal hydrolase 17-like protein A (526 aa).

The disordered stretch occupies residues 1-21 (MVVALSFPEADPALSSPDAPE). The 298-residue stretch at 51–348 (CGLQNTGNSC…NAYVLFYVQQ (298 aa)) folds into the USP domain. Catalysis depends on Cys60, which acts as the Nucleophile. Catalysis depends on His307, which acts as the Proton acceptor. Over residues 374-385 (KKSRRKKHKKKS) the composition is skewed to basic residues. 2 disordered regions span residues 374–394 (KKSRRKKHKKKSPFTEDLGEP) and 465–494 (RSTANWGRDSPDKENQPLHNADRLLTSQGP). The segment covering 473-486 (DSPDKENQPLHNAD) has biased composition (basic and acidic residues).

The protein belongs to the peptidase C19 family. In terms of processing, polyubiquitinated; ubiquitination leads to its subsequent degradation. In terms of tissue distribution, expressed in hematopoietic progenitor cell lines Ba/F3 and FDCP1. Not detected in brain, lung, liver, kidney, thymus, spleen and bone marrow.

It catalyses the reaction Thiol-dependent hydrolysis of ester, thioester, amide, peptide and isopeptide bonds formed by the C-terminal Gly of ubiquitin (a 76-residue protein attached to proteins as an intracellular targeting signal).. In terms of biological role, deubiquitinating enzyme that removes conjugated ubiquitin from specific proteins to regulate different cellular processes. Has deubiquitinating enzyme activity for DNAH5, suggesting a role in the regulation of DNAH5 degradation by the ubiquitin-proteasome pathway. Has growth-suppressing activity; induces arrest in G1 phase upon controlled expression. The polypeptide is Ubiquitin carboxyl-terminal hydrolase 17-like protein A (Usp17la) (Mus musculus (Mouse)).